A 528-amino-acid polypeptide reads, in one-letter code: T-complex protein 1 subunit delta (528 aa).

The protein belongs to the TCP-1 chaperonin family. In terms of assembly, heterooligomeric complex of about 850 to 900 kDa that forms two stacked rings, 12 to 16 nm in diameter.

It localises to the cytoplasm. Functionally, molecular chaperone; assists the folding of proteins upon ATP hydrolysis. Known to play a role, in vitro, in the folding of actin and tubulin. In yeast may play a role in mitotic spindle formation. The protein is T-complex protein 1 subunit delta (CCT4) of Saccharomyces cerevisiae (strain ATCC 204508 / S288c) (Baker's yeast).